A 138-amino-acid polypeptide reads, in one-letter code: uncharacterized protein (138 aa).

Asp-35–Asn-42 contributes to the ATP binding site.

This is an uncharacterized protein from Acanthamoeba polyphaga mimivirus (APMV).